The chain runs to 410 residues: MKEELLKRFTKYVKVDTQSNEESTVCPTTPGQMELANILVTELKEIGMQEVTVDEFGYVMATLPSNTTKEVPVIGFLAHLDTATDLTGKNVQPQVHENYDGKDIVLNKDLNVVLSPKQFPELADYKGKTLITTDGTTLLGADDKAGITEIMVAMNYLINHPEIKHGKIRVAFTPDEEIGRGPERFDVEAFGAKYAYTMDGGPLGELEYESFNAAGAKITFNGNSVHPGTAKNKMVNAVKMAMEFNARIPKDEAPEYTEGYEGFYHLISLNGDVEQAKAYYIIRDFDHLKFVERKTHIASIAKELEEKYGEGSVELKLNDQYYNMREKIEPVKEIVDIVSAAMRNLDIEPKISPIRGGTDGAQLSYKGLPTPNIFGGGENFHGKFEYVALESMVKATEVIIEVARLFEEKE.

His79 contacts Zn(2+). Asp81 is an active-site residue. Residue Asp142 coordinates Zn(2+). Glu176 (proton acceptor) is an active-site residue. Positions 177, 199, and 381 each coordinate Zn(2+).

This sequence belongs to the peptidase M20B family. Zn(2+) is required as a cofactor.

Its subcellular location is the cytoplasm. It carries out the reaction Release of the N-terminal residue from a tripeptide.. Its function is as follows. Cleaves the N-terminal amino acid of tripeptides. The protein is Peptidase T of Listeria monocytogenes serotype 4a (strain HCC23).